A 485-amino-acid polypeptide reads, in one-letter code: Leukocyte receptor cluster member 9 (485 aa).

The C3H1-type zinc finger occupies 8-35 (SEAPAVCRFFLEGRCRFGARCRQPHPGA). The tract at residues 212-247 (ETRTGLDSSLETPEVDGPTKETGLNGTTELEMPDPS) is disordered.

This chain is Leukocyte receptor cluster member 9 (Leng9), found in Mus musculus (Mouse).